Reading from the N-terminus, the 932-residue chain is Lon protease homolog 2, peroxisomal (932 aa).

One can recognise a Lon N-terminal domain in the interval 11–260; it reads LSLVPLPKGS…RVVDILNKQN (250 aa). The disordered stretch occupies residues 298–328; that stretch reads RRGIPGASGTPPPGLGGRNNEADEKESNELD. Basic and acidic residues predominate over residues 317–328; sequence NEADEKESNELD. 486–493 provides a ligand contact to ATP; that stretch reads GPPGTGKT. The Lon proteolytic domain occupies 729–916; it reads HGRPGVVTGL…WEAIRHIWPD (188 aa). Residues Ser-822 and Lys-865 contribute to the active site. The Microbody targeting signal signature appears at 930 to 932; the sequence is SRL.

Belongs to the peptidase S16 family.

Its subcellular location is the peroxisome matrix. It catalyses the reaction Hydrolysis of proteins in presence of ATP.. Its function is as follows. ATP-dependent serine protease that mediates the selective degradation of misfolded and unassembled polypeptides in the peroxisomal matrix. Necessary for type 2 peroxisome targeting signal (PTS2)-containing protein processing and facilitates peroxisome matrix protein import. The protein is Lon protease homolog 2, peroxisomal of Emericella nidulans (strain FGSC A4 / ATCC 38163 / CBS 112.46 / NRRL 194 / M139) (Aspergillus nidulans).